Consider the following 104-residue polypeptide: Holotricin-3 (104 aa).

The signal sequence occupies residues methionine 1–proline 20. The disordered stretch occupies residues glycine 22 to tyrosine 104. Over residues proline 23–glycine 97 the composition is skewed to gly residues. A run of 18 repeats spans residues histidine 27–glycine 30, histidine 31–glycine 34, histidine 35–glycine 38, histidine 39–glycine 42, glutamine 43–glycine 46, histidine 47–glycine 50, proline 51–glycine 54, phenylalanine 55–glycine 58, histidine 59–glycine 62, histidine 63–glycine 66, glycine 67–glycine 70, glycine 71–glycine 74, glycine 75–serine 78, proline 79–glycine 82, alanine 83–glycine 86, tyrosine 87–glycine 90, histidine 91–glycine 94, and histidine 96–glycine 98. Residues histidine 27–glycine 98 form an 18 X 4 AA approximate tandem repeats of H-G-G-G region.

This sequence to T.molitor tenecin 3.

It localises to the secreted. Has antifungal activity against C.albicans. The sequence is that of Holotricin-3 from Holotrichia diomphalia (Korean black chafer).